Consider the following 201-residue polypeptide: Calcium channel flower (201 aa).

3 helical membrane-spanning segments follow: residues 37-57, 59-79, and 103-120; these read LGIV…LSII, LSVS…VVMA, and PMYF…PPIF.

This sequence belongs to the calcium channel flower family. As to quaternary structure, homomultimer. Associates with the dally/ magu complex.

It is found in the cell membrane. The protein resides in the cytoplasmic vesicle. Its subcellular location is the secretory vesicle. It localises to the synaptic vesicle membrane. The protein localises to the presynaptic cell membrane. It is found in the endosome. Its activity is regulated as follows. Channel activity is inhibited by La(3+), which reduces Ca(2+) influx and thus inhibits it's function in promoting activity-dependent bulk endocytosis (ADBE) in response to high stimuli. Its function is as follows. Transmembrane protein which mediates synaptic endocytosis, fitness-based cell culling, neuronal culling, morphogen gradient scaling, and calcium transport. Regulates synaptic endocytosis and hence couples exo- with endocytosis. Controls two major modes of synaptic vesicle (SV) endocytosis in the synaptic boutons of neuromuscular junctions (NMJs); Ca(2+) channel-independent Clathrin-mediated endocytosis (CME) in response to mild stimulation, and Ca(2+) channel-dependent activity-dependent bulk endocytosis (ADBE) in response to strong stimulation. Functions in ADBE and subsequent SV reformation from bulk endosomes by initiating Ca(2+) channel-dependent phosphatidylinositol 4,5-bisphosphate (PtdIns(4,5)P2) compartmentalization in synaptic boutons. There it acts at the periactive zone to provide the low Ca(2+) levels required to initiate Calcineurin activation and upregulate PtdIns(4,5)P2. Conversely PtdIns(4,5)P2 enhances fwe Ca(2+) channel-activity, establishing a positive feedback loop that induces PtdIns(4,5)P2 microdomain at the periactive zone. These microdomains trigger bulk membrane invagination (i.e. ADBE) by triggering actin polymerization while also promoting localization of fwe to bulk endosomes, thereby removing the ADBE trigger to reduce endocytosis and prevent excess membrane uptake. PtdIns(4,5)P2 then promotes SV reformation from the bulk endosomes, to coordinate ADBE and subsequent SV reformation. Different combinations of the flower isoforms at the cell membrane are also required for the identification and elimination of suboptimal or supernumerary cells during development, regeneration, and adulthood. Required for the recognition and elimination of unfit cells in the developing wing during cell competition. In the developing pupal retina, mediates the elimination of unwanted postmitotic neurons, including supernumerary photoreceptor neurons that form at the periphery of the retina and are contained within incomplete ommatidia units. Also required for efficient elimination and replacement of old neurons by newly generated neurons during regeneration in the adult brain following mechanical injury. Downstream of the flower fitness fingerprints, cells identified as unwanted or unfit are eliminated via apoptosis through the expression of ahuizotl (azot). However, the cells marked for elimination by the flower isoforms only undergo apoptosis if additional thresholds are met; (1) their neighboring fit/healthy cells express different levels of the fwe isoforms, and (2) the levels of the protective signal SPARC expressed by the loser or unwanted cells are unable to inhibit caspase activation. These additional thresholds for flower-mediated apoptosis, allows useful cells to recover from transient and limited stress before they are unnecessarily eliminated. Functions with dally and magu in a mechanism of scaling, which utilises apoptosis to ensure that the dpp morphogen gradient, which mediates organ growth, remains proportional to the size of the growing wing. In this mechanism, fwe represses dally- and Magu-dependent activity in expanding the gradient, and dally/Magu inhibits fwe-dependent apoptosis to keep cell death rate low. When the levels of these different proteins are optimally regulated the gradient correctly scales with organ growth but when this fails, fwe-mediated apoptosis is activated to trim the developing tissue to match the correct size of the gradient. The sequence is that of Calcium channel flower from Drosophila willistoni (Fruit fly).